Here is a 152-residue protein sequence, read N- to C-terminus: MIILKKKLAGVSEQSLSLFLTRARKAAGVRGQVQVLVTSSDELRGLNRRFRRKDKATDVLSFPAIVDGEAGDIAISSDIASEYAYELGHSLDEELRILILHGVLHLAGHDHERDKGEMEALESELRDKLKLPSSLIERTTKPAKKAAKRKKR.

Residues His101, His105, and His111 each contribute to the Zn(2+) site. The tract at residues 132-152 is disordered; the sequence is PSSLIERTTKPAKKAAKRKKR. Residues 141-152 are compositionally biased toward basic residues; sequence KPAKKAAKRKKR.

Belongs to the endoribonuclease YbeY family. Requires Zn(2+) as cofactor.

The protein resides in the cytoplasm. Single strand-specific metallo-endoribonuclease involved in late-stage 70S ribosome quality control and in maturation of the 3' terminus of the 16S rRNA. The polypeptide is Endoribonuclease YbeY (Koribacter versatilis (strain Ellin345)).